A 315-amino-acid polypeptide reads, in one-letter code: DNA-directed RNA polymerase subunit alpha (315 aa).

The alpha N-terminal domain (alpha-NTD) stretch occupies residues 1–228 (MLEIEKPKIE…EHLRLFVGLT (228 aa)). Residues 245–315 (KNKLLEMPIE…LGLDLRHDEE (71 aa)) are alpha C-terminal domain (alpha-CTD).

This sequence belongs to the RNA polymerase alpha chain family. In terms of assembly, homodimer. The RNAP catalytic core consists of 2 alpha, 1 beta, 1 beta' and 1 omega subunit. When a sigma factor is associated with the core the holoenzyme is formed, which can initiate transcription.

The enzyme catalyses RNA(n) + a ribonucleoside 5'-triphosphate = RNA(n+1) + diphosphate. In terms of biological role, DNA-dependent RNA polymerase catalyzes the transcription of DNA into RNA using the four ribonucleoside triphosphates as substrates. This Desulforudis audaxviator (strain MP104C) protein is DNA-directed RNA polymerase subunit alpha.